Reading from the N-terminus, the 394-residue chain is Elongation factor Tu (394 aa).

The tr-type G domain occupies 10 to 204; that stretch reads KPHVNVGTIG…ALDRYIPTPE (195 aa). The tract at residues 19 to 26 is G1; sequence GHVDHGKT. 19–26 is a GTP binding site; sequence GHVDHGKT. T26 contributes to the Mg(2+) binding site. The interval 60-64 is G2; the sequence is GITIN. Positions 81–84 are G3; it reads DCPG. Residues 81-85 and 136-139 contribute to the GTP site; these read DCPGH and NKCD. A G4 region spans residues 136–139; the sequence is NKCD. Residues 174 to 176 are G5; the sequence is SAL.

The protein belongs to the TRAFAC class translation factor GTPase superfamily. Classic translation factor GTPase family. EF-Tu/EF-1A subfamily. Monomer.

It is found in the cytoplasm. It catalyses the reaction GTP + H2O = GDP + phosphate + H(+). Its function is as follows. GTP hydrolase that promotes the GTP-dependent binding of aminoacyl-tRNA to the A-site of ribosomes during protein biosynthesis. This is Elongation factor Tu from Neisseria gonorrhoeae.